The sequence spans 92 residues: Small ribosomal subunit protein uS19 (92 aa).

Belongs to the universal ribosomal protein uS19 family.

Functionally, protein S19 forms a complex with S13 that binds strongly to the 16S ribosomal RNA. This is Small ribosomal subunit protein uS19 from Gloeothece citriformis (strain PCC 7424) (Cyanothece sp. (strain PCC 7424)).